The sequence spans 457 residues: Cytochrome b-c1 complex subunit 1, mitochondrial (457 aa).

The transit peptide at Met-1–Lys-26 directs the protein to the mitochondrion.

It belongs to the peptidase M16 family. UQCRC1/QCR1 subfamily. As to quaternary structure, component of the ubiquinol-cytochrome c oxidoreductase (cytochrome b-c1 complex, complex III, CIII), a multisubunit enzyme composed of 10 subunits. The complex is composed of 3 respiratory subunits cytochrome b (COB), cytochrome c1 (CYT1) and Rieske protein (RIP1), 2 core protein subunits COR1 and QCR2, and 5 low-molecular weight protein subunits QCR6, QCR7, QCR8, QCR9 and QCR10. The complex exists as an obligatory dimer and forms supercomplexes (SCs) in the inner mitochondrial membrane with a monomer or a dimer of cytochrome c oxidase (complex IV, CIV), resulting in 2 different assemblies (supercomplexes III(2)IV and III(2)IV(2)). COR1 interacts with COX5A at the CIII-CIV interface.

The protein resides in the mitochondrion inner membrane. Functionally, component of the ubiquinol-cytochrome c oxidoreductase, a multisubunit transmembrane complex that is part of the mitochondrial electron transport chain which drives oxidative phosphorylation. The respiratory chain contains 3 multisubunit complexes succinate dehydrogenase (complex II, CII), ubiquinol-cytochrome c oxidoreductase (cytochrome b-c1 complex, complex III, CIII) and cytochrome c oxidase (complex IV, CIV), that cooperate to transfer electrons derived from NADH and succinate to molecular oxygen, creating an electrochemical gradient over the inner membrane that drives transmembrane transport and the ATP synthase. The cytochrome b-c1 complex catalyzes electron transfer from ubiquinol to cytochrome c, linking this redox reaction to translocation of protons across the mitochondrial inner membrane, with protons being carried across the membrane as hydrogens on the quinol. In the process called Q cycle, 2 protons are consumed from the matrix, 4 protons are released into the intermembrane space and 2 electrons are passed to cytochrome c. The polypeptide is Cytochrome b-c1 complex subunit 1, mitochondrial (COR1) (Saccharomyces cerevisiae (strain ATCC 204508 / S288c) (Baker's yeast)).